Consider the following 191-residue polypeptide: Heme-binding protein 1 (191 aa).

Belongs to the HEBP family. Monomer.

Its subcellular location is the cytoplasm. May bind free porphyrinogens that may be present in the cell and thus facilitate removal of these potentially toxic compound. Binds with a high affinity to one molecule of heme or porphyrins. It binds metalloporphyrins, free porphyrins and N-methylprotoporphyrin with similar affinities. This Bos taurus (Bovine) protein is Heme-binding protein 1 (HEBP1).